The sequence spans 251 residues: Uridylate kinase (251 aa).

19-22 (KLSG) is a binding site for ATP. Residue Gly61 coordinates UMP. Residues Gly62 and Arg66 each coordinate ATP. UMP is bound by residues Asp81 and 142-149 (TGNPYFTT). ATP contacts are provided by Thr169, Tyr175, and Asp178.

This sequence belongs to the UMP kinase family. Homohexamer.

Its subcellular location is the cytoplasm. It carries out the reaction UMP + ATP = UDP + ADP. It functions in the pathway pyrimidine metabolism; CTP biosynthesis via de novo pathway; UDP from UMP (UMPK route): step 1/1. Its activity is regulated as follows. Inhibited by UTP. In terms of biological role, catalyzes the reversible phosphorylation of UMP to UDP. The chain is Uridylate kinase from Anaeromyxobacter dehalogenans (strain 2CP-C).